A 2399-amino-acid chain; its full sequence is Protein DOP1A (2399 aa).

Disordered regions lie at residues 556–598 (PSGQ…SSES), 619–660 (NGQG…GAAG), 1105–1124 (SDSG…EVDP), 1166–1188 (SVTS…PGKE), 1234–1263 (SPCI…HSSI), and 1279–1308 (ETIV…KKKA). 2 stretches are compositionally biased toward low complexity: residues 629 to 647 (GSTS…EETV) and 1105 to 1116 (SDSGCSQSSAGD). Composition is skewed to polar residues over residues 1166–1180 (SVTS…QTKS) and 1234–1252 (SPCI…VPSE). Position 1261 is a phosphoserine (S1261).

It belongs to the DOP1 family.

It is found in the golgi apparatus membrane. In terms of biological role, may be involved in protein traffic between late Golgi and early endosomes. This chain is Protein DOP1A (Dop1a), found in Mus musculus (Mouse).